A 154-amino-acid chain; its full sequence is Ribonuclease H (154 aa).

An RNase H type-1 domain is found at methionine 1–glutamate 142. Mg(2+) contacts are provided by aspartate 10, glutamate 48, aspartate 70, and aspartate 134.

The protein belongs to the RNase H family. As to quaternary structure, monomer. The cofactor is Mg(2+).

It localises to the cytoplasm. It catalyses the reaction Endonucleolytic cleavage to 5'-phosphomonoester.. Its function is as follows. Endonuclease that specifically degrades the RNA of RNA-DNA hybrids. The chain is Ribonuclease H from Haemophilus influenzae (strain 86-028NP).